Here is a 247-residue protein sequence, read N- to C-terminus: 7-cyano-7-deazaguanine synthase (247 aa).

An ATP-binding site is contributed by 21–31 (FSGGQDSTACL). The Zn(2+) site is built by C209, C224, C227, and C230.

Belongs to the QueC family. The cofactor is Zn(2+).

The catalysed reaction is 7-carboxy-7-deazaguanine + NH4(+) + ATP = 7-cyano-7-deazaguanine + ADP + phosphate + H2O + H(+). Its pathway is purine metabolism; 7-cyano-7-deazaguanine biosynthesis. In terms of biological role, catalyzes the ATP-dependent conversion of 7-carboxy-7-deazaguanine (CDG) to 7-cyano-7-deazaguanine (preQ(0)). The chain is 7-cyano-7-deazaguanine synthase from Halorhodospira halophila (strain DSM 244 / SL1) (Ectothiorhodospira halophila (strain DSM 244 / SL1)).